The sequence spans 357 residues: Uroporphyrinogen decarboxylase (357 aa).

Substrate contacts are provided by residues 27 to 31 (RQAGR), D77, Y154, S209, and H330.

This sequence belongs to the uroporphyrinogen decarboxylase family. As to quaternary structure, homodimer.

It localises to the cytoplasm. The catalysed reaction is uroporphyrinogen III + 4 H(+) = coproporphyrinogen III + 4 CO2. It participates in porphyrin-containing compound metabolism; protoporphyrin-IX biosynthesis; coproporphyrinogen-III from 5-aminolevulinate: step 4/4. In terms of biological role, catalyzes the decarboxylation of four acetate groups of uroporphyrinogen-III to yield coproporphyrinogen-III. This is Uroporphyrinogen decarboxylase from Acinetobacter baumannii (strain ATCC 17978 / DSM 105126 / CIP 53.77 / LMG 1025 / NCDC KC755 / 5377).